Reading from the N-terminus, the 218-residue chain is Probable WRKY transcription factor 12 (218 aa).

Residues Ser49–Ser63 show a composition bias toward low complexity. Disordered regions lie at residues Ser49–Asn120 and His199–Phe218. Residues Thr64–Leu77 show a composition bias toward polar residues. A compositionally biased stretch (low complexity) spans Ser105 to Gly116. Residues Ser139 to Ser204 constitute a DNA-binding region (WRKY).

The protein belongs to the WRKY group II-c family.

The protein localises to the nucleus. Transcription factor. Interacts specifically with the W box (5'-(T)TGAC[CT]-3'), a frequently occurring elicitor-responsive cis-acting element. The protein is Probable WRKY transcription factor 12 (WRKY12) of Arabidopsis thaliana (Mouse-ear cress).